Here is a 354-residue protein sequence, read N- to C-terminus: Guanine nucleotide-binding protein alpha-3 subunit (354 aa).

The N-myristoyl glycine moiety is linked to residue Gly-2. A lipid anchor (S-palmitoyl cysteine) is attached at Cys-4. The G-alpha domain occupies 33–354; that stretch reads KECKILLLGS…TNALKDSGIL (322 aa). The tract at residues 36 to 49 is G1 motif; that stretch reads KILLLGSGESGKST. GTP-binding positions include 41–48, 177–183, 202–206, 271–274, and Ala-326; these read GSGESGKS, LRARSKT, DVGGQ, and NKID. Mg(2+) is bound by residues Ser-48 and Thr-183. The tract at residues 175–183 is G2 motif; the sequence is DVLRARSKT. A G3 motif region spans residues 198 to 207; the sequence is IHLFDVGGQR. A G4 motif region spans residues 267–274; the sequence is ILFLNKID. The segment at 324–329 is G5 motif; sequence TQATDT.

Belongs to the G-alpha family. In terms of assembly, g proteins are composed of 3 units; alpha, beta and gamma. The alpha chain contains the guanine nucleotide binding site.

In terms of biological role, guanine nucleotide-binding proteins (G proteins) are involved as modulators or transducers in various transmembrane signaling systems. GPA3 plays an active role in transmission of the pheromone signal. The protein is Guanine nucleotide-binding protein alpha-3 subunit (GPA3) of Mycosarcoma maydis (Corn smut fungus).